A 444-amino-acid polypeptide reads, in one-letter code: Alpha-(1,3)-fucosyltransferase B (444 aa).

Over M1–R6 the chain is Cytoplasmic. A helical; Signal-anchor for type II membrane protein transmembrane segment spans residues Y7 to E27. Residues N28–T444 are Lumenal-facing. Residues N279, N437, and N440 are each glycosylated (N-linked (GlcNAc...) asparagine).

The protein belongs to the glycosyltransferase 10 family.

It localises to the golgi apparatus. It is found in the golgi stack membrane. The protein operates within protein modification; protein glycosylation. The polypeptide is Alpha-(1,3)-fucosyltransferase B (FucTB) (Drosophila melanogaster (Fruit fly)).